The chain runs to 575 residues: Lysine--tRNA ligase (575 aa).

Mg(2+) contacts are provided by glutamate 412 and glutamate 419.

It belongs to the class-II aminoacyl-tRNA synthetase family. Homodimer. It depends on Mg(2+) as a cofactor.

Its subcellular location is the cytoplasm. The enzyme catalyses tRNA(Lys) + L-lysine + ATP = L-lysyl-tRNA(Lys) + AMP + diphosphate. The polypeptide is Lysine--tRNA ligase (Bacteroides fragilis (strain YCH46)).